We begin with the raw amino-acid sequence, 238 residues long: 15,16-dihydrobiliverdin:ferredoxin oxidoreductase (238 aa).

Belongs to the HY2 family.

It catalyses the reaction 15,16-dihydrobiliverdin + oxidized 2[4Fe-4S]-[ferredoxin] = biliverdin IXalpha + reduced 2[4Fe-4S]-[ferredoxin] + 2 H(+). In terms of biological role, catalyzes the two-electron reduction of biliverdin IX-alpha at the C15 methine bridge. This is 15,16-dihydrobiliverdin:ferredoxin oxidoreductase from Prochlorococcus marinus (strain NATL1A).